The sequence spans 118 residues: Acidic phospholipase A2 PA-3 (118 aa).

7 cysteine pairs are disulfide-bonded: C11/C71, C27/C117, C29/C45, C44/C98, C51/C91, C60/C84, and C78/C89. Ca(2+) is bound by residues Y28, G30, and G32. H48 is a catalytic residue. D49 is a binding site for Ca(2+). Residue D92 is part of the active site.

It belongs to the phospholipase A2 family. Group I subfamily. D49 sub-subfamily. Ca(2+) is required as a cofactor. As to expression, expressed by the venom gland.

The protein localises to the secreted. The catalysed reaction is a 1,2-diacyl-sn-glycero-3-phosphocholine + H2O = a 1-acyl-sn-glycero-3-phosphocholine + a fatty acid + H(+). Functionally, PLA2 catalyzes the calcium-dependent hydrolysis of the 2-acyl groups in 3-sn-phosphoglycerides. The sequence is that of Acidic phospholipase A2 PA-3 from Pseudechis australis (Mulga snake).